The sequence spans 266 residues: Putative carbamate hydrolase RutD (266 aa).

It belongs to the AB hydrolase superfamily. Hydrolase RutD family.

It carries out the reaction carbamate + 2 H(+) = NH4(+) + CO2. Functionally, involved in pyrimidine catabolism. May facilitate the hydrolysis of carbamate, a reaction that can also occur spontaneously. The sequence is that of Putative carbamate hydrolase RutD from Escherichia coli O7:K1 (strain IAI39 / ExPEC).